A 103-amino-acid chain; its full sequence is Pyrimidine/purine nucleoside phosphorylase (103 aa).

It belongs to the nucleoside phosphorylase PpnP family.

The enzyme catalyses a purine D-ribonucleoside + phosphate = a purine nucleobase + alpha-D-ribose 1-phosphate. The catalysed reaction is adenosine + phosphate = alpha-D-ribose 1-phosphate + adenine. It carries out the reaction cytidine + phosphate = cytosine + alpha-D-ribose 1-phosphate. It catalyses the reaction guanosine + phosphate = alpha-D-ribose 1-phosphate + guanine. The enzyme catalyses inosine + phosphate = alpha-D-ribose 1-phosphate + hypoxanthine. The catalysed reaction is thymidine + phosphate = 2-deoxy-alpha-D-ribose 1-phosphate + thymine. It carries out the reaction uridine + phosphate = alpha-D-ribose 1-phosphate + uracil. It catalyses the reaction xanthosine + phosphate = alpha-D-ribose 1-phosphate + xanthine. Its function is as follows. Catalyzes the phosphorolysis of diverse nucleosides, yielding D-ribose 1-phosphate and the respective free bases. Can use uridine, adenosine, guanosine, cytidine, thymidine, inosine and xanthosine as substrates. Also catalyzes the reverse reactions. In Shewanella baltica (strain OS223), this protein is Pyrimidine/purine nucleoside phosphorylase.